A 561-amino-acid polypeptide reads, in one-letter code: NAD(P)H-quinone oxidoreductase chain 4 2 (561 aa).

Helical transmembrane passes span 6-26, 36-56, 87-107, 115-135, 136-156, 169-189, 210-230, 244-264, 275-295, 312-332, 333-353, 376-396, 419-439, and 490-510; these read FPWL…IPFI, WYGL…FWKY, LSMP…FAAW, LFYF…VAQD, LMLL…LISI, FLLY…GMAL, AFEL…LAVF, SAPV…YGLI, HVYF…YGGL, VAHM…GISG, ALLQ…LAGV, IFAL…MSGF, VTVF…LSML, and VAIA…PKIA.

This sequence belongs to the complex I subunit 4 family.

Its subcellular location is the cellular thylakoid membrane. It catalyses the reaction a plastoquinone + NADH + (n+1) H(+)(in) = a plastoquinol + NAD(+) + n H(+)(out). It carries out the reaction a plastoquinone + NADPH + (n+1) H(+)(in) = a plastoquinol + NADP(+) + n H(+)(out). Functionally, NDH-1 shuttles electrons from NAD(P)H, via FMN and iron-sulfur (Fe-S) centers, to quinones in the respiratory chain. The immediate electron acceptor for the enzyme in this species is believed to be plastoquinone. Couples the redox reaction to proton translocation (for every two electrons transferred, four hydrogen ions are translocated across the cytoplasmic membrane), and thus conserves the redox energy in a proton gradient. The polypeptide is NAD(P)H-quinone oxidoreductase chain 4 2 (Trichodesmium erythraeum (strain IMS101)).